We begin with the raw amino-acid sequence, 404 residues long: Sorting nexin-5 (404 aa).

Ala2 carries the N-acetylalanine modification. One can recognise a PX domain in the interval 25–172 (LNVDPSLQID…HVFLEYDQDL (148 aa)). A 1,2-diacyl-sn-glycero-3-phospho-(1D-myo-inositol-4,5-bisphosphate) is bound by residues 40 to 46 (SERDKVK), 99 to 105 (FDGPREK), and 113 to 116 (EGSM). Residues 169–261 (DQDLSVRRKN…HSLALEEPTV (93 aa)) are interaction with DOCK1. Residues 183–200 (FGGFFKSVVKSADEVLFS) are membrane-binding amphipathic helix. Ser193 bears the Phosphoserine mark. The region spanning 202–404 (VKEVDDFFEQ…QSCIDLFKNN (203 aa)) is the BAR domain. Lys275 carries the post-translational modification N6-acetyllysine.

It belongs to the sorting nexin family. Forms heterodimers with BAR domain-containing sorting nexins SNX1 and SNX2; does not homodimerize. The heterodimers are proposed to self-assemble into helical arrays on the membrane to stabilize and expand local membrane curvature underlying endosomal tubule formation. Thought to be a component of the originally described retromer complex (also called SNX-BAR retromer) which is a pentamer containing the heterotrimeric retromer cargo-selective complex (CSC), also described as vacuolar protein sorting subcomplex (VPS), and a heterodimeric membrane-deforming subcomplex formed between SNX1 or SNX2 and SNX5 or SNX6 (also called SNX-BAR subcomplex); the respective CSC and SNX-BAR subcomplexes associate with low affinity. Interacts with SNX1, SNX2, VPS26A, VPS29, VPS35, DCTN1, DOCK1, MIB1, PIP5K1C. Interacts with HGS; increased by PIP5K1C kinase activity and by PtdIns(3P) and/or PtdIns(3,4)P2.

The protein resides in the endosome. Its subcellular location is the early endosome. The protein localises to the early endosome membrane. It localises to the cell membrane. It is found in the cytoplasmic vesicle membrane. The protein resides in the cytoplasm. Its subcellular location is the cell projection. The protein localises to the phagocytic cup. It localises to the ruffle. Functionally, involved in several stages of intracellular trafficking. Interacts with membranes containing phosphatidylinositol lipids. Acts in part as component of the retromer membrane-deforming SNX-BAR subcomplex. The SNX-BAR retromer mediates retrograde transport of cargo proteins from endosomes to the trans-Golgi network (TGN) and is involved in endosome-to-plasma membrane transport for cargo protein recycling. The SNX-BAR subcomplex functions to deform the donor membrane into a tubular profile called endosome-to-TGN transport carrier (ETC). Does not have in vitro vesicle-to-membrane remodeling activity. Involved in retrograde transport of lysosomal enzyme receptor IGF2R. May function as link between endosomal transport vesicles and dynactin. Plays a role in the internalization of EGFR after EGF stimulation. Involved in EGFR endosomal sorting and degradation; the function involves PIP5K1C and is retromer-independent. Together with PIP5K1C facilitates HGS interaction with ubiquitinated EGFR, which initiates EGFR sorting to intraluminal vesicles (ILVs) of the multivesicular body for subsequent lysosomal degradation. Involved in E-cadherin sorting and degradation; inhibits PIP5K1C-mediated E-cadherin degradation. Plays a role in macropinocytosis. The protein is Sorting nexin-5 (Snx5) of Rattus norvegicus (Rat).